The sequence spans 1235 residues: High-affinity potassium transport protein (1235 aa).

Residue Ser15 is modified to Phosphoserine. Transmembrane regions (helical) follow at residues Ser49 to Tyr70 and Ile78 to Ile98. Asn100 carries N-linked (GlcNAc...) asparagine glycosylation. The chain crosses the membrane as a helical span at residues Ile107–Phe127. Disordered stretches follow at residues Leu161 to Asp310, Glu323 to Tyr344, Lys361 to Pro441, and Arg488 to Gln565. The segment covering Arg164–Pro179 has biased composition (polar residues). Asn169 is a glycosylation site (N-linked (GlcNAc...) asparagine). Residues Val198–Arg217 show a composition bias toward basic and acidic residues. Low complexity predominate over residues Ser219–Ser232. Residues Asn222 and Asn227 are each glycosylated (N-linked (GlcNAc...) asparagine). A compositionally biased stretch (acidic residues) spans Val237 to Glu247. A compositionally biased stretch (polar residues) spans Tyr248–Lys274. Asn251 carries an N-linked (GlcNAc...) asparagine glycan. N-linked (GlcNAc...) asparagine glycans are attached at residues Asn369 and Asn383. 2 stretches are compositionally biased toward polar residues: residues Glu370 to Gly415 and Ser490 to Val502. Residue Ser414 is modified to Phosphoserine. Asn497, Asn501, and Asn532 each carry an N-linked (GlcNAc...) asparagine glycan. Residues Asp510 to Glu539 show a composition bias toward acidic residues. Ser534 carries the post-translational modification Phosphoserine. The span at Arg540 to Gln563 shows a compositional bias: basic and acidic residues. Asn580 and Asn677 each carry an N-linked (GlcNAc...) asparagine glycan. The segment at His671–Pro706 is disordered. Over residues Glu680–Pro706 the composition is skewed to polar residues. A run of 5 helical transmembrane segments spans residues Ile778–Leu800, Val813–Leu834, Ser838–Ile858, Gly862–Ser882, and Cys898–Leu918. A glycan (N-linked (GlcNAc...) asparagine) is linked at Asn919. Helical transmembrane passes span Trp923–Tyr943 and Ser971–Ile991. The segment at Gly1003–Asn1063 is disordered. Positions Gly1010 to Glu1031 are enriched in acidic residues. Asn1030 carries an N-linked (GlcNAc...) asparagine glycan. Residues Gln1036 to Asn1049 show a composition bias toward low complexity. Transmembrane regions (helical) follow at residues Gln1078–Gly1098 and Ile1111–Tyr1131. N-linked (GlcNAc...) asparagine glycosylation is present at Asn1135.

This sequence belongs to the TrkH potassium transport family.

The protein resides in the membrane. Its function is as follows. This protein is required for high-affinity potassium transport. The polypeptide is High-affinity potassium transport protein (TRK1) (Saccharomyces cerevisiae (strain ATCC 204508 / S288c) (Baker's yeast)).